Reading from the N-terminus, the 77-residue chain is Acyl carrier protein (77 aa).

The Carrier domain maps to 1-76; sequence MENFDKVKDI…DAVKFINSIE (76 aa). Position 36 is an O-(pantetheine 4'-phosphoryl)serine (Ser-36).

Belongs to the acyl carrier protein (ACP) family. In terms of processing, 4'-phosphopantetheine is transferred from CoA to a specific serine of apo-ACP by AcpS. This modification is essential for activity because fatty acids are bound in thioester linkage to the sulfhydryl of the prosthetic group.

The protein localises to the cytoplasm. It functions in the pathway lipid metabolism; fatty acid biosynthesis. Its function is as follows. Carrier of the growing fatty acid chain in fatty acid biosynthesis. This is Acyl carrier protein from Staphylococcus saprophyticus subsp. saprophyticus (strain ATCC 15305 / DSM 20229 / NCIMB 8711 / NCTC 7292 / S-41).